Here is a 340-residue protein sequence, read N- to C-terminus: UDP-N-acetylenolpyruvoylglucosamine reductase (340 aa).

Residues 14-185 (HVEATARWLL…VAVEFNLPLL (172 aa)) enclose the FAD-binding PCMH-type domain. Residue R162 is part of the active site. The active-site Proton donor is S235. E332 is an active-site residue.

This sequence belongs to the MurB family. FAD serves as cofactor.

The protein localises to the cytoplasm. It catalyses the reaction UDP-N-acetyl-alpha-D-muramate + NADP(+) = UDP-N-acetyl-3-O-(1-carboxyvinyl)-alpha-D-glucosamine + NADPH + H(+). Its pathway is cell wall biogenesis; peptidoglycan biosynthesis. In terms of biological role, cell wall formation. The sequence is that of UDP-N-acetylenolpyruvoylglucosamine reductase from Xanthomonas oryzae pv. oryzae (strain KACC10331 / KXO85).